Consider the following 132-residue polypeptide: Putative F-box protein At4g05620 (132 aa).

Positions 17–63 (QKKSLSLPHDVLVSCLAHVSRLHYSILSLVLKNFRSLIASPELYKTR) constitute an F-box domain.

The chain is Putative F-box protein At4g05620 from Arabidopsis thaliana (Mouse-ear cress).